The following is a 429-amino-acid chain: Tubby-like F-box protein 5 (429 aa).

An F-box domain is found at 53–108 (TRWANLPAALLRDVMKKLDESESTWPARKQVVACAGVCKTWRLMCKDIVKSPEFSG). Positions 360–385 (QPGSGSDGGALATRPSLSPQQPEQSN) are disordered. Residues 374–383 (PSLSPQQPEQ) are compositionally biased toward polar residues.

This sequence belongs to the TUB family. As to expression, mostly expressed in roots, flowers and siliques.

This is Tubby-like F-box protein 5 from Arabidopsis thaliana (Mouse-ear cress).